We begin with the raw amino-acid sequence, 560 residues long: Dihydroxy-acid dehydratase (560 aa).

Aspartate 78 is a Mg(2+) binding site. Residue cysteine 119 coordinates [2Fe-2S] cluster. The Mg(2+) site is built by aspartate 120 and lysine 121. Lysine 121 bears the N6-carboxylysine mark. [2Fe-2S] cluster is bound at residue cysteine 192. Residue glutamate 446 participates in Mg(2+) binding. Serine 472 acts as the Proton acceptor in catalysis.

This sequence belongs to the IlvD/Edd family. As to quaternary structure, homodimer. [2Fe-2S] cluster serves as cofactor. Requires Mg(2+) as cofactor.

It catalyses the reaction (2R)-2,3-dihydroxy-3-methylbutanoate = 3-methyl-2-oxobutanoate + H2O. It carries out the reaction (2R,3R)-2,3-dihydroxy-3-methylpentanoate = (S)-3-methyl-2-oxopentanoate + H2O. The protein operates within amino-acid biosynthesis; L-isoleucine biosynthesis; L-isoleucine from 2-oxobutanoate: step 3/4. It functions in the pathway amino-acid biosynthesis; L-valine biosynthesis; L-valine from pyruvate: step 3/4. Functions in the biosynthesis of branched-chain amino acids. Catalyzes the dehydration of (2R,3R)-2,3-dihydroxy-3-methylpentanoate (2,3-dihydroxy-3-methylvalerate) into 2-oxo-3-methylpentanoate (2-oxo-3-methylvalerate) and of (2R)-2,3-dihydroxy-3-methylbutanoate (2,3-dihydroxyisovalerate) into 2-oxo-3-methylbutanoate (2-oxoisovalerate), the penultimate precursor to L-isoleucine and L-valine, respectively. The sequence is that of Dihydroxy-acid dehydratase from Anaeromyxobacter sp. (strain K).